The sequence spans 443 residues: ATP-dependent protease ATPase subunit HslU (443 aa).

Residues isoleucine 20, 62–67, aspartate 255, glutamate 321, and arginine 393 each bind ATP; that span reads GVGKTE.

This sequence belongs to the ClpX chaperone family. HslU subfamily. A double ring-shaped homohexamer of HslV is capped on each side by a ring-shaped HslU homohexamer. The assembly of the HslU/HslV complex is dependent on binding of ATP.

The protein localises to the cytoplasm. Functionally, ATPase subunit of a proteasome-like degradation complex; this subunit has chaperone activity. The binding of ATP and its subsequent hydrolysis by HslU are essential for unfolding of protein substrates subsequently hydrolyzed by HslV. HslU recognizes the N-terminal part of its protein substrates and unfolds these before they are guided to HslV for hydrolysis. This chain is ATP-dependent protease ATPase subunit HslU, found in Helicobacter pylori (strain ATCC 700392 / 26695) (Campylobacter pylori).